Consider the following 396-residue polypeptide: DNA excision repair protein ERCC-8 (396 aa).

WD repeat units lie at residues 33-73 (NKDR…LYDL), 88-129 (CSIG…VWDT), 133-173 (QTAD…LCDL), 177-216 (SCSH…LWDV), 235-274 (QAVE…LWNS), 281-321 (LVNY…VYTV), and 325-363 (EQIT…AWVP). Residues 371–396 (DDDETTTKSQLNPAFEDAWSSSDEEG) form a disordered region. A phosphoserine mark is found at serine 390, serine 391, and serine 392.

As to quaternary structure, part of the CSA complex (also named DCX(ERCC8) complex), a DCX E3 ubiquitin-protein ligase complex containing ERCC8, RBX1, DDB1 and CUL4A; the CSA complex interacts with RNA polymerase II; upon UV irradiation it interacts with the COP9 signalosome and preferentially with the hyperphosphorylated form of RNA polymerase II. Interacts with ERCC6/CSB (via CIM motif); promoting recruitment to lesion-stalled RNA polymerase II (Pol II). Interacts with KIAA1530/UVSSA. Interacts with a subunit of RNA polymerase II TFIIH.

The protein localises to the nucleus. It localises to the chromosome. Its subcellular location is the nucleus matrix. It functions in the pathway protein modification; protein ubiquitination. Substrate-recognition component of the CSA complex, a DCX (DDB1-CUL4-X-box) E3 ubiquitin-protein ligase complex, involved in transcription-coupled nucleotide excision repair (TC-NER), a process during which RNA polymerase II-blocking lesions are rapidly removed from the transcribed strand of active genes. Following recruitment to lesion-stalled RNA polymerase II (Pol II), the CSA complex mediates ubiquitination of Pol II subunit POLR2A/RPB1 at 'Lys-1268', a critical TC-NER checkpoint, governing RNA Pol II stability and initiating DNA damage excision by TFIIH recruitment. The CSA complex also promotes the ubiquitination and subsequent proteasomal degradation of ERCC6/CSB in a UV-dependent manner; ERCC6 degradation is essential for the recovery of RNA synthesis after transcription-coupled repair. Also plays a role in DNA double-strand breaks (DSSBs) repair by non-homologous end joining (NHEJ). In Homo sapiens (Human), this protein is DNA excision repair protein ERCC-8.